A 265-amino-acid chain; its full sequence is Flap endonuclease Xni (265 aa).

D111 is a binding site for Mg(2+). The 5'-3' exonuclease domain maps to 167-260 (VVPAQLVDFW…NLREIRYPPA (94 aa)). The K(+) site is built by L178, V189, and I192. Positions 191–196 (GIGPKT) are interaction with DNA.

It belongs to the Xni family. Mg(2+) is required as a cofactor. K(+) serves as cofactor.

Has flap endonuclease activity. During DNA replication, flap endonucleases cleave the 5'-overhanging flap structure that is generated by displacement synthesis when DNA polymerase encounters the 5'-end of a downstream Okazaki fragment. In Aeromonas salmonicida (strain A449), this protein is Flap endonuclease Xni.